Consider the following 139-residue polypeptide: Mannose-specific lectin (139 aa).

The region spanning 1-109 is the Bulb-type lectin domain; the sequence is DNILYSGETL…ARWATGTNIH (109 aa). Residues glutamine 26, aspartate 28, asparagine 30, tyrosine 34, aspartate 37, lysine 38, tryptophan 41, alanine 42, asparagine 44, glutamine 57, aspartate 59, asparagine 61, tyrosine 65, isoleucine 72, tryptophan 73, asparagine 76, asparagine 83, glutamine 89, aspartate 91, asparagine 93, tyrosine 97, and tryptophan 102 each coordinate alpha-D-mannopyranose. Cysteine 29 and cysteine 52 are joined by a disulfide.

In terms of assembly, homotetramer; antiparallel. In terms of tissue distribution, detected in bulbs (at protein level).

It is found in the secreted. Mannose-specific lectin. Displays antiviral activity and therefore may contribute to defense against infections. Shows agglutinating activity towards rabbit erythrocytes. In Narcissus tazetta (Cream narcissus), this protein is Mannose-specific lectin.